Here is a 526-residue protein sequence, read N- to C-terminus: Cytochrome P450 monooxygenase 58 (526 aa).

Helical transmembrane passes span 13 to 33 (IASSTIGQRILLALALGLLLI), 115 to 135 (FIMAGEILTGGMLIVFTGYGK), and 306 to 326 (IGAGAETTAASLSVFMLAMTL). Cys-451 contributes to the heme binding site.

Belongs to the cytochrome P450 family. Heme serves as cofactor.

It localises to the membrane. The protein operates within secondary metabolite biosynthesis. Its function is as follows. Cytochrome P450 monooxygenase that is able to use delta(6)-protoilludene as a substrate to produce delta(6)-protoilludene-8-ol. This is Cytochrome P450 monooxygenase 58 from Postia placenta (strain ATCC 44394 / Madison 698-R) (Brown rot fungus).